The chain runs to 950 residues: Protocadherin alpha-1 (950 aa).

Positions 1 to 29 are cleaved as a signal peptide; that stretch reads MVFSRRGGLGARDLLLWLLLLAAWEVGSG. 6 Cadherin domains span residues 30 to 133, 157 to 242, 243 to 350, 351 to 455, 456 to 565, and 588 to 678; these read QLHY…PPVF, AADA…APLF, DQAV…APEL, AVTS…APAF, AQPE…APAL, and GHVV…APKA. Topologically, residues 30–697 are extracellular; that stretch reads QLHYSIPEEA…GPEAALVDVN (668 aa). N-linked (GlcNAc...) asparagine glycosylation is found at asparagine 257 and asparagine 265. Asparagine 548 is a glycosylation site (N-linked (GlcNAc...) asparagine). Residues 698–718 form a helical membrane-spanning segment; sequence VYLIIAICAVSSLLVLTLLLY. Residues 719–950 are Cytoplasmic-facing; sequence TALRCSVPPT…GNSTTDNSDQ (232 aa). PXXP repeat units follow at residues 734–737, 799–802, 832–835, 873–876, and 891–894; these read PGKP, PRQP, PGGP, PGNP, and PGSP. The 5 X 4 AA repeats of P-X-X-P stretch occupies residues 734 to 894; that stretch reads PGKPTLVCSS…PDKFIIPGSP (161 aa). 3 disordered regions span residues 752–808, 828–856, and 871–890; these read QQRR…DWRY, LRAG…EVSP, and YGPG…KFII. Residues 900-950 are disordered; it reads RQEPTNSQIDKSDFITFGKKEETKKKKKKKKGNKTQEKKEKGNSTTDNSDQ. The span at 909–923 shows a compositional bias: basic and acidic residues; it reads DKSDFITFGKKEETK.

It is found in the cell membrane. It localises to the secreted. Its function is as follows. Potential calcium-dependent cell-adhesion protein. May be involved in the establishment and maintenance of specific neuronal connections in the brain. The protein is Protocadherin alpha-1 (PCDHA1) of Homo sapiens (Human).